Here is a 100-residue protein sequence, read N- to C-terminus: NADH-quinone oxidoreductase subunit K (100 aa).

The next 3 helical transmembrane spans lie at 4–24, 28–48, and 60–80; these read YEYYVALSGLLMVLGFIGVIV, IIAMLISTELMLNAVNVAFVA, and VFVFFILTIAAAEAAIGLGLI.

The protein belongs to the complex I subunit 4L family. In terms of assembly, NDH-1 is composed of 14 different subunits. Subunits NuoA, H, J, K, L, M, N constitute the membrane sector of the complex.

The protein resides in the cell inner membrane. The enzyme catalyses a quinone + NADH + 5 H(+)(in) = a quinol + NAD(+) + 4 H(+)(out). NDH-1 shuttles electrons from NADH, via FMN and iron-sulfur (Fe-S) centers, to quinones in the respiratory chain. The immediate electron acceptor for the enzyme in this species is believed to be ubiquinone. Couples the redox reaction to proton translocation (for every two electrons transferred, four hydrogen ions are translocated across the cytoplasmic membrane), and thus conserves the redox energy in a proton gradient. This chain is NADH-quinone oxidoreductase subunit K, found in Sulfurihydrogenibium azorense (strain DSM 15241 / OCM 825 / Az-Fu1).